The sequence spans 268 residues: Small ribosomal subunit protein eS1 (268 aa).

Residues 1 to 21 (MAVGKNKGLSKGGKKGGKKKV) are disordered.

This sequence belongs to the eukaryotic ribosomal protein eS1 family. As to quaternary structure, component of the small ribosomal subunit. Mature ribosomes consist of a small (40S) and a large (60S) subunit. The 40S subunit contains about 33 different proteins and 1 molecule of RNA (18S). The 60S subunit contains about 49 different proteins and 3 molecules of RNA (28S, 5.8S and 5S).

The protein localises to the cytoplasm. Functionally, essential for oogenesis; required for late follicle cell development. The chain is Small ribosomal subunit protein eS1 from Drosophila mojavensis (Fruit fly).